A 219-amino-acid polypeptide reads, in one-letter code: Glucagon-2 (219 aa).

A signal peptide spans 1–20 (MKSTCYMIGILLLILQNTYQ). Propeptides lie at residues 21–50 (SPVP…LKEV), 84–95 (SGGLSRRNADYE), 136–140 (NAEIE), 175–178 (IRYS), and 213–219 (KDLLEEH). The tract at residues 23–43 (VPEADGSSRSVKAARNEAVDD) is disordered.

It belongs to the glucagon family.

The protein localises to the secreted. In terms of biological role, promotes hydrolysis of glycogen and lipids, and raises the blood sugar level. The chain is Glucagon-2 (gcg2) from Xenopus laevis (African clawed frog).